Here is a 151-residue protein sequence, read N- to C-terminus: Deoxyuridine 5'-triphosphate nucleotidohydrolase (151 aa).

Substrate-binding positions include 70-72, asparagine 83, 87-89, and methionine 97; these read RSG and LID.

Belongs to the dUTPase family. Mg(2+) serves as cofactor.

The enzyme catalyses dUTP + H2O = dUMP + diphosphate + H(+). It functions in the pathway pyrimidine metabolism; dUMP biosynthesis; dUMP from dCTP (dUTP route): step 2/2. Functionally, this enzyme is involved in nucleotide metabolism: it produces dUMP, the immediate precursor of thymidine nucleotides and it decreases the intracellular concentration of dUTP so that uracil cannot be incorporated into DNA. This Pseudomonas putida (strain ATCC 700007 / DSM 6899 / JCM 31910 / BCRC 17059 / LMG 24140 / F1) protein is Deoxyuridine 5'-triphosphate nucleotidohydrolase.